Reading from the N-terminus, the 162-residue chain is Chemoreceptor glutamine deamidase CheD (162 aa).

Belongs to the CheD family. Forms a complex with CheC.

It carries out the reaction L-glutaminyl-[protein] + H2O = L-glutamyl-[protein] + NH4(+). In terms of biological role, deamidates glutamine residues to glutamate on methyl-accepting chemotaxis receptors (MCPs). CheD-mediated MCP deamidation is required for productive communication of the conformational signals of the chemoreceptors to the CheA kinase. This Halalkalibacterium halodurans (strain ATCC BAA-125 / DSM 18197 / FERM 7344 / JCM 9153 / C-125) (Bacillus halodurans) protein is Chemoreceptor glutamine deamidase CheD.